The sequence spans 101 residues: NAD(P)H-quinone oxidoreductase subunit 4L, chloroplastic (101 aa).

3 helical membrane-spanning segments follow: residues 2–22 (MFEHVLFLSVYLFSIGIYGLI), 32–52 (ICLELILNSINLNLVTFSDLF), and 61–81 (IFAIFVIALAAAEAAIGLSIL).

This sequence belongs to the complex I subunit 4L family. In terms of assembly, NDH is composed of at least 16 different subunits, 5 of which are encoded in the nucleus.

It localises to the plastid. Its subcellular location is the chloroplast thylakoid membrane. The enzyme catalyses a plastoquinone + NADH + (n+1) H(+)(in) = a plastoquinol + NAD(+) + n H(+)(out). The catalysed reaction is a plastoquinone + NADPH + (n+1) H(+)(in) = a plastoquinol + NADP(+) + n H(+)(out). In terms of biological role, NDH shuttles electrons from NAD(P)H:plastoquinone, via FMN and iron-sulfur (Fe-S) centers, to quinones in the photosynthetic chain and possibly in a chloroplast respiratory chain. The immediate electron acceptor for the enzyme in this species is believed to be plastoquinone. Couples the redox reaction to proton translocation, and thus conserves the redox energy in a proton gradient. The polypeptide is NAD(P)H-quinone oxidoreductase subunit 4L, chloroplastic (Agrostis stolonifera (Creeping bentgrass)).